Here is a 150-residue protein sequence, read N- to C-terminus: Arginine repressor (150 aa).

Belongs to the ArgR family.

It is found in the cytoplasm. The protein operates within amino-acid biosynthesis; L-arginine biosynthesis [regulation]. Its function is as follows. Regulates arginine biosynthesis genes. This chain is Arginine repressor, found in Clostridium botulinum (strain Loch Maree / Type A3).